The chain runs to 442 residues: tRNA-2-methylthio-N(6)-dimethylallyladenosine synthase (442 aa).

Residues 5-122 (KKVFIKTLGC…LPEMIKQKQK (118 aa)) form the MTTase N-terminal domain. Cysteine 14, cysteine 51, cysteine 85, cysteine 159, cysteine 163, and cysteine 166 together coordinate [4Fe-4S] cluster. Residues 145–378 (KAEGAKAYVS…DLLNSNAQII (234 aa)) form the Radical SAM core domain. The TRAM domain occupies 380–442 (RQMVGTNQRI…LPNSLRGELI (63 aa)).

It belongs to the methylthiotransferase family. MiaB subfamily. Monomer. Requires [4Fe-4S] cluster as cofactor.

It is found in the cytoplasm. The catalysed reaction is N(6)-dimethylallyladenosine(37) in tRNA + (sulfur carrier)-SH + AH2 + 2 S-adenosyl-L-methionine = 2-methylsulfanyl-N(6)-dimethylallyladenosine(37) in tRNA + (sulfur carrier)-H + 5'-deoxyadenosine + L-methionine + A + S-adenosyl-L-homocysteine + 2 H(+). Catalyzes the methylthiolation of N6-(dimethylallyl)adenosine (i(6)A), leading to the formation of 2-methylthio-N6-(dimethylallyl)adenosine (ms(2)i(6)A) at position 37 in tRNAs that read codons beginning with uridine. This is tRNA-2-methylthio-N(6)-dimethylallyladenosine synthase from Francisella tularensis subsp. tularensis (strain FSC 198).